A 266-amino-acid chain; its full sequence is Glucosamine-6-phosphate deaminase (266 aa).

Aspartate 67 (proton acceptor; for enolization step) is an active-site residue. Catalysis depends on asparagine 139, which acts as the For ring-opening step. The active-site Proton acceptor; for ring-opening step is histidine 141. Residue glutamate 146 is the For ring-opening step of the active site.

It belongs to the glucosamine/galactosamine-6-phosphate isomerase family. NagB subfamily. In terms of assembly, homohexamer.

It carries out the reaction alpha-D-glucosamine 6-phosphate + H2O = beta-D-fructose 6-phosphate + NH4(+). It functions in the pathway amino-sugar metabolism; N-acetylneuraminate degradation; D-fructose 6-phosphate from N-acetylneuraminate: step 5/5. In terms of biological role, catalyzes the reversible isomerization-deamination of glucosamine 6-phosphate (GlcN6P) to form fructose 6-phosphate (Fru6P) and ammonium ion. This Marinomonas sp. (strain MWYL1) protein is Glucosamine-6-phosphate deaminase.